A 101-amino-acid chain; its full sequence is Small ribosomal subunit protein uS14 (101 aa).

The segment at 1 to 21 (MAKVSLIKKNESRKKKSQSLH) is disordered. Residues 11–21 (ESRKKKSQSLH) are compositionally biased toward basic residues.

It belongs to the universal ribosomal protein uS14 family. In terms of assembly, part of the 30S ribosomal subunit. Contacts proteins S3 and S10.

Its function is as follows. Binds 16S rRNA, required for the assembly of 30S particles and may also be responsible for determining the conformation of the 16S rRNA at the A site. The polypeptide is Small ribosomal subunit protein uS14 (Rickettsia canadensis (strain McKiel)).